The sequence spans 302 residues: 4-hydroxy-tetrahydrodipicolinate synthase (302 aa).

Thr-55 serves as a coordination point for pyruvate. The active-site Proton donor/acceptor is the Tyr-144. Lys-172 acts as the Schiff-base intermediate with substrate in catalysis. Residue Val-214 coordinates pyruvate.

It belongs to the DapA family. In terms of assembly, homotetramer; dimer of dimers.

It localises to the cytoplasm. It catalyses the reaction L-aspartate 4-semialdehyde + pyruvate = (2S,4S)-4-hydroxy-2,3,4,5-tetrahydrodipicolinate + H2O + H(+). The protein operates within amino-acid biosynthesis; L-lysine biosynthesis via DAP pathway; (S)-tetrahydrodipicolinate from L-aspartate: step 3/4. In terms of biological role, catalyzes the condensation of (S)-aspartate-beta-semialdehyde [(S)-ASA] and pyruvate to 4-hydroxy-tetrahydrodipicolinate (HTPA). This chain is 4-hydroxy-tetrahydrodipicolinate synthase, found in Synechococcus sp. (strain CC9311).